Here is a 342-residue protein sequence, read N- to C-terminus: tRNA N6-adenosine threonylcarbamoyltransferase (342 aa).

Positions 111 and 115 each coordinate Fe cation. Substrate contacts are provided by residues 134 to 138 (LVSGG), D167, G180, and N272. A Fe cation-binding site is contributed by D300.

This sequence belongs to the KAE1 / TsaD family. The cofactor is Fe(2+).

It localises to the cytoplasm. The catalysed reaction is L-threonylcarbamoyladenylate + adenosine(37) in tRNA = N(6)-L-threonylcarbamoyladenosine(37) in tRNA + AMP + H(+). Functionally, required for the formation of a threonylcarbamoyl group on adenosine at position 37 (t(6)A37) in tRNAs that read codons beginning with adenine. Is involved in the transfer of the threonylcarbamoyl moiety of threonylcarbamoyl-AMP (TC-AMP) to the N6 group of A37, together with TsaE and TsaB. TsaD likely plays a direct catalytic role in this reaction. The protein is tRNA N6-adenosine threonylcarbamoyltransferase of Aromatoleum aromaticum (strain DSM 19018 / LMG 30748 / EbN1) (Azoarcus sp. (strain EbN1)).